Here is a 626-residue protein sequence, read N- to C-terminus: Polygalacturonase 1 beta-like protein 3 (626 aa).

An N-terminal signal peptide occupies residues 1 to 23 (MLKQFLLLQSFSFFLFNVVIVGG). Residues 117–120 (FSVY) form an FXXY 1 repeat. N-linked (GlcNAc...) asparagine glycosylation occurs at Asn124. 11 FXXY repeats span residues 125 to 128 (FTNY), 139 to 142 (FKNY), 153 to 156 (FRRY), 167 to 170 (FTVY), 181 to 184 (FNSY), 195 to 198 (FTNY), 209 to 212 (FTAY), 223 to 226 (FKTY), 238 to 241 (FTSY), 252 to 255 (FTSY), and 266 to 269 (FSNY). A glycan (N-linked (GlcNAc...) asparagine) is linked at Asn141. Asn277 carries an N-linked (GlcNAc...) asparagine glycan. 7 FXXY repeats span residues 280–283 (FTSY), 294–297 (FNNY), 308–311 (FANY), 322–325 (FSSY), 336–339 (FVNY), 350–353 (FTGY), and 364–367 (FKTY). N-linked (GlcNAc...) asparagine glycosylation occurs at Asn370. 2 FXXY repeats span residues 373–376 (FKDY) and 383–386 (FAKY). Asn387 and Asn465 each carry an N-linked (GlcNAc...) asparagine glycan. Residues 411–625 (FFRESSLKEG…FENDMNWAIA (215 aa)) enclose the BURP domain.

As to expression, expressed in flowers and stems. Detected in trichomes, guard cells, root vascular tissue, root hairs, pollen sacs, sepals and styles of pistils.

It is found in the secreted. The protein resides in the extracellular space. The protein localises to the apoplast. Its subcellular location is the cell wall. Involved in cell size determination. May serve as a chaperone for expansins through the secretory pathway. This Arabidopsis thaliana (Mouse-ear cress) protein is Polygalacturonase 1 beta-like protein 3.